The sequence spans 282 residues: Small ribosomal subunit protein uS2 (282 aa).

The segment at 260–282 (KRRRSKVYKEEEREVVTNEDESR) is disordered. The segment covering 266-282 (VYKEEEREVVTNEDESR) has biased composition (basic and acidic residues).

The protein belongs to the universal ribosomal protein uS2 family.

The polypeptide is Small ribosomal subunit protein uS2 (Wolbachia sp. subsp. Drosophila simulans (strain wRi)).